The primary structure comprises 275 residues: Formamidopyrimidine-DNA glycosylase (275 aa).

The active-site Schiff-base intermediate with DNA is Pro-2. Glu-3 functions as the Proton donor in the catalytic mechanism. Lys-59 functions as the Proton donor; for beta-elimination activity in the catalytic mechanism. Residues His-92, Arg-111, and Lys-155 each contribute to the DNA site. The segment at 240-274 (YVYGQTGEPCRRCGHEIEKMKLGGRGTHYCPHCQQ) adopts an FPG-type zinc-finger fold. Arg-264 functions as the Proton donor; for delta-elimination activity in the catalytic mechanism.

Belongs to the FPG family. Monomer. It depends on Zn(2+) as a cofactor.

The catalysed reaction is Hydrolysis of DNA containing ring-opened 7-methylguanine residues, releasing 2,6-diamino-4-hydroxy-5-(N-methyl)formamidopyrimidine.. It catalyses the reaction 2'-deoxyribonucleotide-(2'-deoxyribose 5'-phosphate)-2'-deoxyribonucleotide-DNA = a 3'-end 2'-deoxyribonucleotide-(2,3-dehydro-2,3-deoxyribose 5'-phosphate)-DNA + a 5'-end 5'-phospho-2'-deoxyribonucleoside-DNA + H(+). Involved in base excision repair of DNA damaged by oxidation or by mutagenic agents. Acts as a DNA glycosylase that recognizes and removes damaged bases. Has a preference for oxidized purines, such as 7,8-dihydro-8-oxoguanine (8-oxoG). Has AP (apurinic/apyrimidinic) lyase activity and introduces nicks in the DNA strand. Cleaves the DNA backbone by beta-delta elimination to generate a single-strand break at the site of the removed base with both 3'- and 5'-phosphates. This Exiguobacterium sp. (strain ATCC BAA-1283 / AT1b) protein is Formamidopyrimidine-DNA glycosylase.